The sequence spans 120 residues: Nascent polypeptide-associated complex protein (120 aa).

Residues 12–80 (GMNPAKMKQM…VKEVPKSLEI (69 aa)) form the NAC-A/B domain.

It belongs to the NAC-alpha family. Homodimer. Interacts with the ribosome. Binds ribosomal RNA.

In terms of biological role, contacts the emerging nascent chain on the ribosome. This chain is Nascent polypeptide-associated complex protein, found in Methanosarcina mazei (strain ATCC BAA-159 / DSM 3647 / Goe1 / Go1 / JCM 11833 / OCM 88) (Methanosarcina frisia).